The following is a 445-amino-acid chain: Xylose isomerase (445 aa).

Catalysis depends on residues H107 and D110. E238, E274, H277, D302, D313, D315, and D345 together coordinate Mg(2+).

The protein belongs to the xylose isomerase family. As to quaternary structure, homotetramer. Requires Mg(2+) as cofactor.

The protein localises to the cytoplasm. It carries out the reaction alpha-D-xylose = alpha-D-xylulofuranose. The polypeptide is Xylose isomerase (xylA) (Priestia megaterium (strain DSM 319 / IMG 1521) (Bacillus megaterium)).